The following is a 445-amino-acid chain: Beclin-1 (445 aa).

A BH3 motif is present at residues 103–122 (TMENLSRRLKVTGDLFDIMS). Residues 137 to 264 (DTLLDQLDTQ…QLDKLKKTNV (128 aa)) are a coiled coil. Residues 240 to 445 (DDLKSVENQM…AWVSSQFYNK (206 aa)) are evolutionary conserved domain (ECD). The interval 420–445 (WTKALKFMLTNLKWGLAWVSSQFYNK) is required for membrane-association.

It belongs to the beclin family. Component of the PI3K (PI3KC3/PI3K-III/class III phosphatidylinositol 3-kinase) complex. May be proteolytically processed by caspases; the C-terminal fragment(s) may induce apoptosis.

It is found in the cytoplasm. The protein localises to the golgi apparatus. It localises to the trans-Golgi network membrane. The protein resides in the endosome membrane. Its subcellular location is the endoplasmic reticulum membrane. It is found in the mitochondrion membrane. The protein localises to the cytoplasmic vesicle. It localises to the autophagosome. In terms of biological role, plays a central role in autophagy. Acts as core subunit of different PI3K complex forms that mediate formation of phosphatidylinositol 3-phosphate and are believed to play a role in multiple membrane trafficking pathways: PI3KC3-C1 is involved in initiation of autophagosomes and PI3KC3-C2 in maturation of autophagosomes and endocytosis. Involved in regulation of degradative endocytic trafficking and required for the abscission step in cytokinesis, probably in the context of PI3KC3-C2. Essential for the formation of PI3KC3-C2 but not PI3KC3-C1 PI3K complex forms. Involved in endocytosis including endosome formation in neuronal cells. This Xenopus laevis (African clawed frog) protein is Beclin-1 (becn1).